A 1024-amino-acid chain; its full sequence is Hemolysin, plasmid (1024 aa).

Over residues 20-32 (AANKLHSAGQSTK) the composition is skewed to polar residues. Positions 20 to 39 (AANKLHSAGQSTKDALKKAA) are disordered. A run of 3 helical transmembrane segments spans residues 238–260 (IGAG…ILSN), 268–327 (KAAA…LSIA), and 365–411 (DASL…GILE). N6-myristoyl lysine attachment occurs at residues Lys564 and Lys690. Hemolysin-type calcium-binding repeat units lie at residues 732 to 749 (FGSK…DDLI), 750 to 767 (EGND…NDTL), 768 to 785 (SGGN…NDKL), 786 to 803 (IGVA…DDEF), 816 to 833 (FGGK…ADLL), and 834 to 851 (DGGE…NDIY).

This sequence belongs to the RTX prokaryotic toxin (TC 1.C.11) family. Post-translationally, myristoylated by HlyC; the toxin only becomes active when modified. Mainly myristoylated, while a minor fraction is acylated with pentadecanoyl (C15:0; 26%) and heptadecanoyl (C17:0; 6%) fatty acyl groups. Fatty acylation is involved in binding to host membranes and promotes the irreversible insertion of Hemolysin into the host cell membrane. Can be activated by both myristoylation and palmitoylation, but HlyC catalyzes lysine myristoylation.

The protein resides in the secreted. It is found in the host cell membrane. Bacterial hemolysins are exotoxins that attack blood cell membranes and cause cell rupture by forming a pore. In Escherichia coli, this protein is Hemolysin, plasmid.